Reading from the N-terminus, the 471-residue chain is MIVGILTTLATLATLAASVPLEERQACSSVWGQCGGQNWSGPTCCASGSTCVYSNDYYSQCLPGAASSSSSTRAASTTSRVSPTTSRSSSATPPPGSTTTRVPPVGSGTATYSGNPFVGVTPWANAYYASEVSSLAIPSLTGAMATAAAAVAKVPSFMWLDTLDKTPLMEQTLADIRTANKNGGNYAGQFVVYDLPDRDCAALASNGEYSIADGGVAKYKNYIDTIRQIVVEYSDIRTLLVIEPDSLANLVTNLGTPKCANAQSAYLECINYAVTQLNLPNVAMYLDAGHAGWLGWPANQDPAAQLFANVYKNASSPRALRGLATNVANYNGWNITSPPSYTQGNAVYNEKLYIHAIGPLLANHGWSNAFFITDQGRSGKQPTGQQQWGDWCNVIGTGFGIRPSANTGDSLLDSFVWVKPGGECDGTSDSSAPRFDSHCALPDALQPAPQAGAWFQAYFVQLLTNANPSFL.

An N-terminal signal peptide occupies residues 1–18 (MIVGILTTLATLATLAAS). Residues 19 to 24 (VPLEER) constitute a propeptide that is removed on maturation. The residue at position 25 (Gln25) is a Pyrrolidone carboxylic acid. The CBM1 domain occupies 26 to 62 (ACSSVWGQCGGQNWSGPTCCASGSTCVYSNDYYSQCL). Positions 64-101 (GAASSSSSTRAASTTSRVSPTTSRSSSATPPPGSTTTR) are enriched in low complexity. The disordered stretch occupies residues 64 to 108 (GAASSSSSTRAASTTSRVSPTTSRSSSATPPPGSTTTRVPPVGSG). A linker region spans residues 66-106 (ASSSSSTRAASTTSRVSPTTSRSSSATPPPGSTTTRVPPVG). The catalytic stretch occupies residues 107–471 (SGTATYSGNP…LLTNANPSFL (365 aa)). 2 O-linked (Man...) threonine glycosylation sites follow: Thr111 and Thr121. 4 O-linked (Man...) serine glycosylation sites follow: Ser130, Ser133, Ser134, and Ser139. A glycan (O-linked (Man...) threonine) is linked at Thr146. Cys200 and Cys259 are disulfide-bonded. The active-site Proton donor is the Asp245. N-linked (GlcNAc) asparagine glycosylation is present at Asn313. Asn334 carries an N-linked (GlcNAc...) (high mannose) asparagine glycan. Cys392 and Cys439 are disulfide-bonded.

Belongs to the glycosyl hydrolase 6 (cellulase B) family. Post-translationally, asn-334 contains mainly a high-mannose-type glycan (Hex(7-9)GlcNAc(2)) in a 3:1 ration with a single GlcNAc. Asn-313 was primarily unglycosylated with a small fraction (18%) bearing a single GlcNAc at this site.

Its subcellular location is the secreted. The enzyme catalyses Hydrolysis of (1-&gt;4)-beta-D-glucosidic linkages in cellulose and cellotetraose, releasing cellobiose from the non-reducing ends of the chains.. Its function is as follows. Exocellobiohydrolases (CBH) that catalyzes the hydrolysis of 1,4-beta-D-glucosidic bonds in cellulose to release the disaccharide cellobiose. The degradation of cellulose involves an interplay between different cellulolytic enzymes. Hydrolysis starts with endoglucanases (EGs), which cut internal beta-1,4-glucosidic bonds in cellulose to reduce the polymerization degree of the substrate and create new chain ends for exocellobiohydrolases (CBHs). The CBHs release the disaccharide cellobiose from the non-reducing end of the cellulose polymer chain. Finally, beta-1,4-glucosidases hydrolyze the cellobiose and other short cello-oligosaccharides into glucose units. The sequence is that of Exoglucanase 2 (cbh2) from Hypocrea jecorina (Trichoderma reesei).